Here is a 321-residue protein sequence, read N- to C-terminus: Biotin synthase (321 aa).

The Radical SAM core domain maps to 37 to 264 (RDMELCTLSS…TSVIRLSAGR (228 aa)). The [4Fe-4S] cluster site is built by C52, C56, and C59. Residues C96, C127, C187, and R259 each contribute to the [2Fe-2S] cluster site.

Belongs to the radical SAM superfamily. Biotin synthase family. In terms of assembly, homodimer. It depends on [4Fe-4S] cluster as a cofactor. Requires [2Fe-2S] cluster as cofactor.

The catalysed reaction is (4R,5S)-dethiobiotin + (sulfur carrier)-SH + 2 reduced [2Fe-2S]-[ferredoxin] + 2 S-adenosyl-L-methionine = (sulfur carrier)-H + biotin + 2 5'-deoxyadenosine + 2 L-methionine + 2 oxidized [2Fe-2S]-[ferredoxin]. Its pathway is cofactor biosynthesis; biotin biosynthesis; biotin from 7,8-diaminononanoate: step 2/2. Its function is as follows. Catalyzes the conversion of dethiobiotin (DTB) to biotin by the insertion of a sulfur atom into dethiobiotin via a radical-based mechanism. The chain is Biotin synthase from Coxiella burnetii (strain CbuK_Q154) (Coxiella burnetii (strain Q154)).